A 49-amino-acid chain; its full sequence is Large ribosomal subunit protein bL32 (49 aa).

Belongs to the bacterial ribosomal protein bL32 family.

The protein is Large ribosomal subunit protein bL32 of Nautilia profundicola (strain ATCC BAA-1463 / DSM 18972 / AmH).